Here is a 91-residue protein sequence, read N- to C-terminus: Putative regulatory protein Moth_0891 (91 aa).

The protein belongs to the RemA family.

This Moorella thermoacetica (strain ATCC 39073 / JCM 9320) protein is Putative regulatory protein Moth_0891.